We begin with the raw amino-acid sequence, 525 residues long: Acetyl-CoA hydrolase (525 aa).

CoA is bound at residue 280–284 (GIGNI). Glu-305 acts as the 5-glutamyl coenzyme A thioester intermediate in catalysis. Positions 395 and 399 each coordinate CoA.

The protein belongs to the acetyl-CoA hydrolase/transferase family.

It is found in the cytoplasm. The enzyme catalyses acetyl-CoA + H2O = acetate + CoA + H(+). Its function is as follows. Required for utilization of acetate. This Neurospora crassa (strain ATCC 24698 / 74-OR23-1A / CBS 708.71 / DSM 1257 / FGSC 987) protein is Acetyl-CoA hydrolase (acu-8).